The sequence spans 388 residues: Mannitol-1-phosphate 5-dehydrogenase (388 aa).

4-15 (AVHFGAGNIGRG) is a binding site for NAD(+).

Belongs to the mannitol dehydrogenase family.

It carries out the reaction D-mannitol 1-phosphate + NAD(+) = beta-D-fructose 6-phosphate + NADH + H(+). The polypeptide is Mannitol-1-phosphate 5-dehydrogenase (Lactococcus lactis subsp. cremoris (strain MG1363)).